Reading from the N-terminus, the 116-residue chain is Aspartate 1-decarboxylase (116 aa).

Ser25 acts as the Schiff-base intermediate with substrate; via pyruvic acid in catalysis. Position 25 is a pyruvic acid (Ser) (Ser25). Thr57 contributes to the substrate binding site. Catalysis depends on Tyr58, which acts as the Proton donor. Position 72–74 (72–74 (GAA)) interacts with substrate.

Belongs to the PanD family. Heterooctamer of four alpha and four beta subunits. It depends on pyruvate as a cofactor. Is synthesized initially as an inactive proenzyme, which is activated by self-cleavage at a specific serine bond to produce a beta-subunit with a hydroxyl group at its C-terminus and an alpha-subunit with a pyruvoyl group at its N-terminus.

The protein localises to the cytoplasm. The catalysed reaction is L-aspartate + H(+) = beta-alanine + CO2. It participates in cofactor biosynthesis; (R)-pantothenate biosynthesis; beta-alanine from L-aspartate: step 1/1. In terms of biological role, catalyzes the pyruvoyl-dependent decarboxylation of aspartate to produce beta-alanine. The protein is Aspartate 1-decarboxylase of Helicobacter pylori (strain HPAG1).